A 433-amino-acid chain; its full sequence is MQVSVETTQGLERRVTVTVPADTIDSEVKRLLKEEYRHRRVNGFRKGKIPPNVLQKLFGREARSRAASSIMQSKYFEAVMQEKLNPAGAPAIEPKVNEPGKDLEFTATFEVYPEVEVQNLDKVKVEKPAVEVTEKDVDNMLETLQKQHADWKEVKRKSKKGDRVTMDFVGSIDGEEFEGGKADDFALELGEGRMIPGFEDQIKGIKAGEEKTIEVTFPEDYHAENLKGKEAQFVVTAKKVEARDLPELNDEFVALFGVKEGGVEALKEEVRKNMERELKNAVKAKVKEQVLKGIVENNDVELPKSMIDQEIDQLRKQAAQRFGGNVEQMPDLPAELFEEQAKERVKVGLLLGEVIRGNELKADDEKVDEIIATAASAYEDPQEVVEYYKSNNDMMQQVRNLALEEQAIEFVLEKASVKDKKASFDDIMNPKQQ.

The PPIase FKBP-type domain maps to 161-246; sequence GDRVTMDFVG…AKKVEARDLP (86 aa).

Belongs to the FKBP-type PPIase family. Tig subfamily.

The protein resides in the cytoplasm. The catalysed reaction is [protein]-peptidylproline (omega=180) = [protein]-peptidylproline (omega=0). In terms of biological role, involved in protein export. Acts as a chaperone by maintaining the newly synthesized protein in an open conformation. Functions as a peptidyl-prolyl cis-trans isomerase. In Idiomarina loihiensis (strain ATCC BAA-735 / DSM 15497 / L2-TR), this protein is Trigger factor.